The chain runs to 535 residues: CTP synthase (535 aa).

Residues 1-266 (MKTKFIFITG…DERVVEKLNI (266 aa)) are amidoligase domain. Serine 14 contributes to the CTP binding site. Serine 14 serves as a coordination point for UTP. ATP contacts are provided by residues 15–20 (SIGKGL) and aspartate 72. The Mg(2+) site is built by aspartate 72 and glutamate 140. CTP contacts are provided by residues 147-149 (DIE), 187-192 (KTKPTQ), and lysine 223. Residues 187-192 (KTKPTQ) and lysine 223 contribute to the UTP site. A Glutamine amidotransferase type-1 domain is found at 292 to 534 (RIAIVGKYVN…VRAALIQRDA (243 aa)). Glycine 354 contacts L-glutamine. Catalysis depends on cysteine 381, which acts as the Nucleophile; for glutamine hydrolysis. L-glutamine contacts are provided by residues 382–385 (LGMQ), glutamate 405, and arginine 462. Active-site residues include histidine 507 and glutamate 509.

Belongs to the CTP synthase family. As to quaternary structure, homotetramer.

It carries out the reaction UTP + L-glutamine + ATP + H2O = CTP + L-glutamate + ADP + phosphate + 2 H(+). The catalysed reaction is L-glutamine + H2O = L-glutamate + NH4(+). The enzyme catalyses UTP + NH4(+) + ATP = CTP + ADP + phosphate + 2 H(+). It participates in pyrimidine metabolism; CTP biosynthesis via de novo pathway; CTP from UDP: step 2/2. With respect to regulation, allosterically activated by GTP, when glutamine is the substrate; GTP has no effect on the reaction when ammonia is the substrate. The allosteric effector GTP functions by stabilizing the protein conformation that binds the tetrahedral intermediate(s) formed during glutamine hydrolysis. Inhibited by the product CTP, via allosteric rather than competitive inhibition. Catalyzes the ATP-dependent amination of UTP to CTP with either L-glutamine or ammonia as the source of nitrogen. Regulates intracellular CTP levels through interactions with the four ribonucleotide triphosphates. The sequence is that of CTP synthase from Pelobacter propionicus (strain DSM 2379 / NBRC 103807 / OttBd1).